Consider the following 106-residue polypeptide: ATP-dependent Clp protease adapter protein ClpS (106 aa).

Over residues 1 to 13 (MPRNTSHEHDHGL) the composition is skewed to basic and acidic residues. The segment at 1-20 (MPRNTSHEHDHGLMVEASKP) is disordered.

The protein belongs to the ClpS family. Binds to the N-terminal domain of the chaperone ClpA.

Its function is as follows. Involved in the modulation of the specificity of the ClpAP-mediated ATP-dependent protein degradation. This Xanthomonas axonopodis pv. citri (strain 306) protein is ATP-dependent Clp protease adapter protein ClpS.